Reading from the N-terminus, the 79-residue chain is RNA-binding protein Hfq (79 aa).

The region spanning 10-69 is the Sm domain; it reads DPFLNALRKEHVPVSIYLVNGIKLQGNIESFDQYVVLLRNTVTQMVYKHAISTVVPARPV.

Belongs to the Hfq family. Homohexamer.

Its function is as follows. RNA chaperone that binds small regulatory RNA (sRNAs) and mRNAs to facilitate mRNA translational regulation in response to envelope stress, environmental stress and changes in metabolite concentrations. Also binds with high specificity to tRNAs. This Burkholderia mallei (strain ATCC 23344) protein is RNA-binding protein Hfq.